Here is a 105-residue protein sequence, read N- to C-terminus: Small ribosomal subunit protein uS10 (105 aa).

Belongs to the universal ribosomal protein uS10 family. As to quaternary structure, part of the 30S ribosomal subunit.

Its function is as follows. Involved in the binding of tRNA to the ribosomes. The sequence is that of Small ribosomal subunit protein uS10 from Aster yellows witches'-broom phytoplasma (strain AYWB).